We begin with the raw amino-acid sequence, 370 residues long: NSFL1 cofactor p47 (370 aa).

The segment at 54–73 is disordered; that stretch reads SQATPSSVSRGTAPSDNRVT. A phosphoserine mark is found at S74, S102, and S114. Disordered stretches follow at residues 80-116 and 137-157; these read HDQD…RSPN and VTKS…GYRL. Positions 109–115 match the Nuclear localization signal motif; it reads PPRKRSP. Position 140 is a phosphoserine; by CDK1 (S140). A Phosphotyrosine modification is found at Y167. Positions 172–175 match the Nuclear localization signal motif; it reads RRRH. S176, S192, and S272 each carry phosphoserine. The region spanning 179–244 is the SEP domain; that stretch reads DVHVVLKLWK…MEDHRDEDFV (66 aa). The tract at residues 272-292 is disordered; the sequence is SPAQQAENEAKASSSISIDES. The UBX domain occupies 291–368; it reads ESQPTTNIQI…NLLNAVIVQR (78 aa).

As to quaternary structure, part of a ternary complex containing STX5A, NSFL1C and VCP. NSFL1C forms a homotrimer that binds to one end of a VCP homohexamer. The complex binds to membranes enriched in phosphatidylethanolamine-containing lipids and promotes Golgi membrane fusion. Interaction with VCIP135 leads to dissociation of the complex via ATP hydrolysis by VCP. Binds ubiquitin and mono-ubiquitinated proteins via its N-terminal UBA-like domain when bound to VCP. Post-translationally, phosphorylated during mitosis. Phosphorylation inhibits interaction with Golgi membranes and is required for the fragmentation of the Golgi stacks during mitosis.

The protein resides in the nucleus. Its subcellular location is the golgi apparatus. It localises to the golgi stack. The protein localises to the chromosome. It is found in the cytoplasm. The protein resides in the cytoskeleton. Its subcellular location is the microtubule organizing center. It localises to the centrosome. Functionally, reduces the ATPase activity of VCP. Necessary for the fragmentation of Golgi stacks during mitosis and for VCP-mediated reassembly of Golgi stacks after mitosis. May play a role in VCP-mediated formation of transitional endoplasmic reticulum (tER). Inhibits the activity of CTSL (in vitro). Together with UBXN2B/p37, regulates the centrosomal levels of kinase AURKA/Aurora A during mitotic progression by promoting AURKA removal from centrosomes in prophase. Also, regulates spindle orientation during mitosis. The sequence is that of NSFL1 cofactor p47 (NSFL1C) from Bos taurus (Bovine).